A 130-amino-acid chain; its full sequence is Putative pre-16S rRNA nuclease (130 aa).

Belongs to the YqgF nuclease family.

The protein resides in the cytoplasm. Its function is as follows. Could be a nuclease involved in processing of the 5'-end of pre-16S rRNA. The polypeptide is Putative pre-16S rRNA nuclease (Buchnera aphidicola subsp. Cinara cedri (strain Cc)).